Consider the following 260-residue polypeptide: MEATSTAATSDKQRSSIHALPVLQDNIIWIWIKGDQAVVVDPAIAEPVKTWLQTRKLSLAAVLQTHHHADHIGGTLELLRDWPNAAVVAAADDRDRIPFQTISVRDRDKISLLNSSVEVLAVAGHTRAHIAYYLPTNKEDREDPAVFCGDTLFGAGCGRLFEGTAEDMFKALQRLCCLPAKTRVYCAHEYTEANLRWASALHPEDIAISERLVDVSSRRQRGALSLPSSISEEQRTNLFVRAQNSKELAELRQHKDQWRN.

Positions 66, 68, 70, 71, 125, 150, and 188 each coordinate Zn(2+).

Belongs to the metallo-beta-lactamase superfamily. Glyoxalase II family. As to quaternary structure, monomer. Zn(2+) serves as cofactor.

The enzyme catalyses an S-(2-hydroxyacyl)glutathione + H2O = a 2-hydroxy carboxylate + glutathione + H(+). Its pathway is secondary metabolite metabolism; methylglyoxal degradation; (R)-lactate from methylglyoxal: step 2/2. In terms of biological role, thiolesterase that catalyzes the hydrolysis of S-D-lactoyl-glutathione to form glutathione and D-lactic acid. The polypeptide is Hydroxyacylglutathione hydrolase (Prochlorococcus marinus (strain MIT 9303)).